We begin with the raw amino-acid sequence, 339 residues long: ATPase GET3 (339 aa).

Position 37-44 (37-44 (KGGVGKTT)) interacts with ATP. Asp-66 is a catalytic residue. ATP contacts are provided by Glu-237 and Asn-264. 2 residues coordinate Zn(2+): Cys-275 and Cys-278.

The protein belongs to the arsA ATPase family. In terms of assembly, homodimer.

The protein resides in the cytoplasm. Its subcellular location is the endoplasmic reticulum. Functionally, ATPase required for the post-translational delivery of tail-anchored (TA) proteins to the endoplasmic reticulum. Recognizes and selectively binds the transmembrane domain of TA proteins in the cytosol. This complex then targets to the endoplasmic reticulum by membrane-bound receptors, where the tail-anchored protein is released for insertion. This process is regulated by ATP binding and hydrolysis. ATP binding drives the homodimer towards the closed dimer state, facilitating recognition of newly synthesized TA membrane proteins. ATP hydrolysis is required for insertion. Subsequently, the homodimer reverts towards the open dimer state, lowering its affinity for the membrane-bound receptor, and returning it to the cytosol to initiate a new round of targeting. This chain is ATPase GET3, found in Rhodotorula glutinis (Yeast).